A 254-amino-acid polypeptide reads, in one-letter code: Aspartate/glutamate leucyltransferase (254 aa).

The protein belongs to the R-transferase family. Bpt subfamily.

It is found in the cytoplasm. It catalyses the reaction N-terminal L-glutamyl-[protein] + L-leucyl-tRNA(Leu) = N-terminal L-leucyl-L-glutamyl-[protein] + tRNA(Leu) + H(+). The catalysed reaction is N-terminal L-aspartyl-[protein] + L-leucyl-tRNA(Leu) = N-terminal L-leucyl-L-aspartyl-[protein] + tRNA(Leu) + H(+). Functions in the N-end rule pathway of protein degradation where it conjugates Leu from its aminoacyl-tRNA to the N-termini of proteins containing an N-terminal aspartate or glutamate. This is Aspartate/glutamate leucyltransferase from Xylella fastidiosa (strain M23).